Here is a 339-residue protein sequence, read N- to C-terminus: Protein-arginine kinase (339 aa).

A Phosphagen kinase C-terminal domain is found at 14–242 (IVINSNISLS…LNVISEEKKF (229 aa)). ATP contacts are provided by residues 17–21 (NSNIS), 164–168 (RASVN), and 195–200 (KGLYEE).

The protein belongs to the ATP:guanido phosphotransferase family.

The enzyme catalyses L-arginyl-[protein] + ATP = N(omega)-phospho-L-arginyl-[protein] + ADP + H(+). Its function is as follows. Catalyzes the specific phosphorylation of arginine residues in proteins. The polypeptide is Protein-arginine kinase (Clostridium botulinum (strain Eklund 17B / Type B)).